The sequence spans 184 residues: Latex serine proteinase inhibitor (184 aa).

C45 and C89 are joined by a disulfide. N84 and N90 each carry an N-linked (GlcNAc...) asparagine glycan. C142 and C153 are disulfide-bonded.

The protein belongs to the protease inhibitor I3 (leguminous Kunitz-type inhibitor) family.

The protein resides in the secreted. The protein localises to the extracellular space. The chain is Latex serine proteinase inhibitor from Carica papaya (Papaya).